A 441-amino-acid chain; its full sequence is Probable glycine dehydrogenase (decarboxylating) subunit 1 (441 aa).

The protein belongs to the GcvP family. N-terminal subunit subfamily. The glycine cleavage system is composed of four proteins: P, T, L and H. In this organism, the P 'protein' is a heterodimer of two subunits.

It catalyses the reaction N(6)-[(R)-lipoyl]-L-lysyl-[glycine-cleavage complex H protein] + glycine + H(+) = N(6)-[(R)-S(8)-aminomethyldihydrolipoyl]-L-lysyl-[glycine-cleavage complex H protein] + CO2. In terms of biological role, the glycine cleavage system catalyzes the degradation of glycine. The P protein binds the alpha-amino group of glycine through its pyridoxal phosphate cofactor; CO(2) is released and the remaining methylamine moiety is then transferred to the lipoamide cofactor of the H protein. This Halobacterium salinarum (strain ATCC 700922 / JCM 11081 / NRC-1) (Halobacterium halobium) protein is Probable glycine dehydrogenase (decarboxylating) subunit 1.